Consider the following 1070-residue polypeptide: Carbamoyl phosphate synthase large chain (1070 aa).

The tract at residues 1-401 (MPKRDDIKTI…ALLKAVRSLE (401 aa)) is carboxyphosphate synthetic domain. Residues Arg129, Arg169, Gly175, Gly176, Lys208, Ile210, Glu215, Gly241, Ile242, His243, Gln284, and Glu298 each coordinate ATP. In terms of domain architecture, ATP-grasp 1 spans 133-327 (RDLMNELGEP…IAKLAAKIAV (195 aa)). Gln284, Glu298, and Asn300 together coordinate Mg(2+). Mn(2+)-binding residues include Gln284, Glu298, and Asn300. The interval 402 to 546 (IGADHLLLEE…YSTYEEENES (145 aa)) is oligomerization domain. The segment at 547–929 (TRSAKESVIV…ALYKGFVASG (383 aa)) is carbamoyl phosphate synthetic domain. The 191-residue stretch at 671 to 861 (EKALEILQIP…MANVATRVIL (191 aa)) folds into the ATP-grasp 2 domain. ATP is bound by residues Arg707, Arg746, Val748, Glu752, Gly777, Val778, His779, Ser780, Gln820, and Glu832. Mg(2+)-binding residues include Gln820, Glu832, and Asn834. Residues Gln820, Glu832, and Asn834 each coordinate Mn(2+). An MGS-like domain is found at 930–1070 (TTMHDYGTVL…SEVKQPKARV (141 aa)). Residues 930–1070 (TTMHDYGTVL…SEVKQPKARV (141 aa)) form an allosteric domain region.

This sequence belongs to the CarB family. In terms of assembly, composed of two chains; the small (or glutamine) chain promotes the hydrolysis of glutamine to ammonia, which is used by the large (or ammonia) chain to synthesize carbamoyl phosphate. Tetramer of heterodimers (alpha,beta)4. Requires Mg(2+) as cofactor. It depends on Mn(2+) as a cofactor.

It carries out the reaction hydrogencarbonate + L-glutamine + 2 ATP + H2O = carbamoyl phosphate + L-glutamate + 2 ADP + phosphate + 2 H(+). The enzyme catalyses hydrogencarbonate + NH4(+) + 2 ATP = carbamoyl phosphate + 2 ADP + phosphate + 2 H(+). The protein operates within amino-acid biosynthesis; L-arginine biosynthesis; carbamoyl phosphate from bicarbonate: step 1/1. It participates in pyrimidine metabolism; UMP biosynthesis via de novo pathway; (S)-dihydroorotate from bicarbonate: step 1/3. Large subunit of the glutamine-dependent carbamoyl phosphate synthetase (CPSase). CPSase catalyzes the formation of carbamoyl phosphate from the ammonia moiety of glutamine, carbonate, and phosphate donated by ATP, constituting the first step of 2 biosynthetic pathways, one leading to arginine and/or urea and the other to pyrimidine nucleotides. The large subunit (synthetase) binds the substrates ammonia (free or transferred from glutamine from the small subunit), hydrogencarbonate and ATP and carries out an ATP-coupled ligase reaction, activating hydrogencarbonate by forming carboxy phosphate which reacts with ammonia to form carbamoyl phosphate. The polypeptide is Carbamoyl phosphate synthase large chain (Listeria monocytogenes serotype 4b (strain F2365)).